Consider the following 186-residue polypeptide: uncharacterized protein (186 aa).

An N-terminal signal peptide occupies residues 1 to 18 (MKKFFFAAALVVSGLLVG). Cys19 is lipidated: N-palmitoyl cysteine. Cys19 carries the S-diacylglycerol cysteine lipid modification.

It localises to the cell membrane. This is an uncharacterized protein from Salmonella typhimurium (strain LT2 / SGSC1412 / ATCC 700720).